We begin with the raw amino-acid sequence, 454 residues long: Ribosomal protein uS12 methylthiotransferase RimO (454 aa).

The 112-residue stretch at S14–Q125 folds into the MTTase N-terminal domain. Positions 23, 59, 88, 163, 167, and 170 each coordinate [4Fe-4S] cluster. The Radical SAM core domain occupies D149 to D378. The 72-residue stretch at Q381–K452 folds into the TRAM domain.

It belongs to the methylthiotransferase family. RimO subfamily. [4Fe-4S] cluster is required as a cofactor.

It localises to the cytoplasm. The catalysed reaction is L-aspartate(89)-[ribosomal protein uS12]-hydrogen + (sulfur carrier)-SH + AH2 + 2 S-adenosyl-L-methionine = 3-methylsulfanyl-L-aspartate(89)-[ribosomal protein uS12]-hydrogen + (sulfur carrier)-H + 5'-deoxyadenosine + L-methionine + A + S-adenosyl-L-homocysteine + 2 H(+). Catalyzes the methylthiolation of an aspartic acid residue of ribosomal protein uS12. The chain is Ribosomal protein uS12 methylthiotransferase RimO from Prochlorococcus marinus (strain AS9601).